The following is a 548-amino-acid chain: Tryprostatin B 6-hydroxylase (548 aa).

A run of 3 helical transmembrane segments spans residues 5-25, 35-54, and 73-93; these read MKCGYLATAGLIGICIHLWYF, WRYVRFHLCLTMGVSALLYA, and LLMVTYLIGLFTSLLLYRTLF. C491 lines the heme pocket.

Belongs to the cytochrome P450 family. The cofactor is heme.

It is found in the membrane. It catalyses the reaction tryprostatin B + reduced [NADPH--hemoprotein reductase] + O2 = 6-hydroxytryprostatin B + oxidized [NADPH--hemoprotein reductase] + H2O + H(+). The protein operates within mycotoxin biosynthesis. Cytochrome P450 monooxygenase; part of the gene cluster that mediates the biosynthesis of fumitremorgins, indole alkaloids that carry not only intriguing chemical structures, but also interesting biological and pharmacological activities. The biosynthesis of fumitremorgin-type alkaloids begins by condensation of the two amino acids L-tryptophan and L-proline to brevianamide F, catalyzed by the non-ribosomal peptide synthetase ftmPS/ftmA. Brevianamide F is then prenylated by the prenyltransferase ftmPT1/ftmB in the presence of dimethylallyl diphosphate, resulting in the formation of tryprostatin B. The three cytochrome P450 monooxygenases, ftmP450-1/ftmC, ftmP450-2/ftmE and ftmP450-3/FtmG, are responsible for the conversion of tryprostatin B to 6-hydroxytryprostatin B, tryprostatin A to fumitremorgin C and fumitremorgin C to 12,13-dihydroxyfumitremorgin C, respectively. The putative methyltransferase ftmMT/ftmD is expected for the conversion of 6-hydroxytryprostatin B to tryprostatin A. FtmPT2/FtmH catalyzes the prenylation of 12,13-dihydroxyfumitre-morgin C in the presence of dimethylallyl diphosphate, resulting in the formation of fumitremorgin B. Fumitremorgin B is further converted to verruculogen by ftmOx1/ftmF via the insertion of an endoperoxide bond between the two prenyl moieties. Finally, verruculogen is further converted to fumitremorgin A by the verruculogen prenyltransferase ftmPT3. The sequence is that of Tryprostatin B 6-hydroxylase from Neosartorya fischeri (strain ATCC 1020 / DSM 3700 / CBS 544.65 / FGSC A1164 / JCM 1740 / NRRL 181 / WB 181) (Aspergillus fischerianus).